Reading from the N-terminus, the 43-residue chain is Photosystem I reaction center subunit IX (43 aa).

A helical transmembrane segment spans residues Tyr7 to Ile27.

Belongs to the PsaJ family.

It is found in the plastid. The protein resides in the chloroplast thylakoid membrane. In terms of biological role, may help in the organization of the PsaE and PsaF subunits. This chain is Photosystem I reaction center subunit IX, found in Oenothera argillicola (Appalachian evening primrose).